A 160-amino-acid polypeptide reads, in one-letter code: Serine-protein kinase RsbW (160 aa).

It belongs to the anti-sigma-factor family.

It carries out the reaction L-seryl-[protein] + ATP = O-phospho-L-seryl-[protein] + ADP + H(+). The catalysed reaction is L-threonyl-[protein] + ATP = O-phospho-L-threonyl-[protein] + ADP + H(+). Its function is as follows. Negative regulator of sigma-B activity. Phosphorylates and inactivates its specific antagonist protein, RsbV. Upon phosphorylation of RsbV, RsbW is released and binds to sigma-B, thereby blocking its ability to form an RNA polymerase holoenzyme (E-sigma-B). This chain is Serine-protein kinase RsbW, found in Bacillus cereus (strain B4264).